We begin with the raw amino-acid sequence, 72 residues long: Translation initiation factor IF-1 (72 aa).

An S1-like domain is found at 1–72 (MSKEDMIEFS…TKGRITFRFK (72 aa)).

It belongs to the IF-1 family. Component of the 30S ribosomal translation pre-initiation complex which assembles on the 30S ribosome in the order IF-2 and IF-3, IF-1 and N-formylmethionyl-tRNA(fMet); mRNA recruitment can occur at any time during PIC assembly.

The protein resides in the cytoplasm. One of the essential components for the initiation of protein synthesis. Stabilizes the binding of IF-2 and IF-3 on the 30S subunit to which N-formylmethionyl-tRNA(fMet) subsequently binds. Helps modulate mRNA selection, yielding the 30S pre-initiation complex (PIC). Upon addition of the 50S ribosomal subunit IF-1, IF-2 and IF-3 are released leaving the mature 70S translation initiation complex. The protein is Translation initiation factor IF-1 of Granulibacter bethesdensis (strain ATCC BAA-1260 / CGDNIH1).